The chain runs to 1363 residues: MRVVDKMAGLMWAALTLVIGLGLLVPSNGEEYICDSMDIRNRVSNLRQLENCTVIEGYLQILLIDFAEEQDYSGLAFPNLVEITDYFLLYRVRGLTNLSELFPNLAVIRGTNLFFNYALVVFEMLDMQKIGLYSLQNITRGSVRIEKNPNLCYLDTIDWSFIAESGYSNNFIVDNREEEECVNFCPGRCRIKHPVLQDLCWAEEHCQKVCPESCLGNCRDGISGCCHENCIGGCDGPTERDCVACKYFVHNGECLIQCPPDTYQYKDRRCITEEECPNTTNSVWKLHHRKCIPECPSGYTTDINNPRLCTECEGQCPKSCKGGLVDSLAAAQRFRGCTIIEGELKISIRGGDNIIDELEENLGLIEEVGHYVAIVRSYALVTLDFLRSLKRIRGIQKENGYAFYVLDNRNLEKLFDWDRTDITIDEGKLFFHFNPKLCRHVILTMVDKVGLPEHAITDTDISTLTNGDQAQCSFSRLEIEEINTSKDMIILRWSEFRPPDPRDLLSYTVSYRETEDQGIDEYDGQDACGNTEWKEFDVSPTQTAHIITGLKPWTQYALLVKTYTKAGAREGSGAKSDIVYARTDADKPTHPQDVVVYSNSSNTLIITWKPPNRPNGNVTHYIVKYKRQQEDVAEMEQREYCKGGLKPHRPTQGLEDIVNNEEEPNNSTIGDGTCCECPKSEDEIRIEEEEAAFQQEFENFLHNNVYHKRENETRAGRRRRELPVTARPFYSNQTVNVTLPSTNRTVPPTPTPNPNPQLETTVWNEHMVVLTGLRHFSEYIIEVIACNADAAVGCSGSAVELARTQADDSADNIPGNITVVEIKEDMAKLYWPKPDSPNSMVVHYNIEYKKLGSDFNYEQQEPKCVENFKFLQSQGYTISNLVAGNYSVRFRATSFAGNGSWSNYVTFYVEEEDTSPDPQDPQQQVPVSLMIGMGVGFSLLLILAVIFGIWYCTKKRFGDKQMPNGVLYASVNPEYMSSDDVYVPDEWEVPREKITLIRELGQGSFGMVYEGEAKDVVKDEPMVSVAVKTVNESASIRERIEFLNEASVMKTFNCHHVVKLMGVVSKGQPTLVVMELMALGDLKNYLRRHRPEEDVGLSDSPASNEAKNSPFAENDNDLPPTFKDIIQMAGVIADGMSYLAAKKFVHRDLACRNCMVAQDRTVKIGDFGMTRDIYETDYYRKGGKGLLPVRWMSPESLKVGVFTSQSDVWSYGVVLWEMATLASQPYQGKSNEEVLKFVIDGGMLEKPEGCPNKLYDLMKLCWQYRQSMRPTFLEIVEILSPELQAHFNEVSFYHSLDNHGREPLEMDDVALDSGADTETEMYPSGSEFSSTPSPPSETPYSHMNGSHPQNGSMNLRIPKSTLC.

The signal sequence occupies residues 1–29 (MRVVDKMAGLMWAALTLVIGLGLLVPSNG). Residues Asn-51, Asn-97, Asn-137, Asn-278, Asn-483, Asn-599, Asn-617, Asn-665, Asn-666, Asn-711, Asn-732, Asn-736, Asn-743, Asn-816, Asn-885, and Asn-898 are each glycosylated (N-linked (GlcNAc...) asparagine). Fibronectin type-III domains follow at residues 473 to 586 (SFSR…TDAD) and 590 to 680 (HPQD…CPKS). 2 consecutive Fibronectin type-III domains span residues 712 to 804 (ETRA…LART) and 813 to 912 (IPGN…VEEE). At 721–928 (ELPVTARPFY…QDPQQQVPVS (208 aa)) the chain is on the extracellular side. The tract at residues 739 to 759 (LPSTNRTVPPTPTPNPNPQLE) is disordered. A helical membrane pass occupies residues 929–949 (LMIGMGVGFSLLLILAVIFGI). At 950 to 1363 (WYCTKKRFGD…NLRIPKSTLC (414 aa)) the chain is on the cytoplasmic side. The Protein kinase domain occupies 994 to 1283 (ITLIRELGQG…EIVEILSPEL (290 aa)). Residues 1000–1008 (LGQGSFGMV) and Lys-1028 each bind ATP. Residues 1091–1117 (PEEDVGLSDSPASNEAKNSPFAENDND) form a disordered region. Asp-1148 acts as the Proton acceptor in catalysis. Tyr-1174 is subject to Phosphotyrosine; by autocatalysis. The segment at 1316 to 1363 (DTETEMYPSGSEFSSTPSPPSETPYSHMNGSHPQNGSMNLRIPKSTLC) is disordered. Over residues 1322-1331 (YPSGSEFSST) the composition is skewed to low complexity. The span at 1343–1353 (MNGSHPQNGSM) shows a compositional bias: polar residues.

It belongs to the protein kinase superfamily. Tyr protein kinase family. Insulin receptor subfamily. As to quaternary structure, probable tetramer of 2 alpha and 2 beta chains linked by disulfide bonds. The alpha chains contribute to the formation of the ligand-binding domain, while the beta chains carry the kinase domain. The cofactor is Mn(2+).

The protein resides in the membrane. It catalyses the reaction L-tyrosyl-[protein] + ATP = O-phospho-L-tyrosyl-[protein] + ADP + H(+). Its function is as follows. This receptor binds to the insulin related peptide and has a tyrosine-protein kinase activity. The chain is Insulin-like peptide receptor from Branchiostoma lanceolatum (Common lancelet).